We begin with the raw amino-acid sequence, 313 residues long: Dihydroorotate dehydrogenase B (NAD(+)), catalytic subunit (313 aa).

FMN contacts are provided by residues S21 and 45 to 46; that span reads KA. Residues K45 and 69–73 each bind substrate; that span reads NAIGL. Residues N99 and N127 each contribute to the FMN site. N127 contacts substrate. The active-site Nucleophile is C130. Position 191 (I191) interacts with FMN. A substrate-binding site is contributed by 192 to 193; it reads NT. Residues G217, 243 to 244, and 265 to 266 each bind FMN; these read GG and GT.

The protein belongs to the dihydroorotate dehydrogenase family. Type 1 subfamily. Heterotetramer of 2 PyrK and 2 PyrD type B subunits. FMN serves as cofactor.

The protein resides in the cytoplasm. The catalysed reaction is (S)-dihydroorotate + NAD(+) = orotate + NADH + H(+). It functions in the pathway pyrimidine metabolism; UMP biosynthesis via de novo pathway; orotate from (S)-dihydroorotate (NAD(+) route): step 1/1. In terms of biological role, catalyzes the conversion of dihydroorotate to orotate with NAD(+) as electron acceptor. The protein is Dihydroorotate dehydrogenase B (NAD(+)), catalytic subunit (pyrD) of Bacillus caldolyticus.